Consider the following 90-residue polypeptide: Putative membrane protein insertion efficiency factor (90 aa).

This sequence belongs to the UPF0161 family.

It is found in the cell membrane. Functionally, could be involved in insertion of integral membrane proteins into the membrane. This chain is Putative membrane protein insertion efficiency factor, found in Lactococcus lactis subsp. cremoris (strain MG1363).